A 199-amino-acid polypeptide reads, in one-letter code: Recombination protein RecR (199 aa).

Residues 57–72 form a C4-type zinc finger; the sequence is CSICGNITDEDPCAIC. The region spanning 80–176 is the Toprim domain; it reads STILVVEQPK…KVTRLAHGLS (97 aa).

It belongs to the RecR family.

Its function is as follows. May play a role in DNA repair. It seems to be involved in an RecBC-independent recombinational process of DNA repair. It may act with RecF and RecO. In Lacticaseibacillus casei (strain BL23) (Lactobacillus casei), this protein is Recombination protein RecR.